Reading from the N-terminus, the 135-residue chain is S-protein homolog 20 (135 aa).

An N-terminal signal peptide occupies residues methionine 1 to alanine 26. An N-linked (GlcNAc...) asparagine glycan is attached at asparagine 88.

It belongs to the plant self-incompatibility (S1) protein family.

Its subcellular location is the secreted. The protein is S-protein homolog 20 of Arabidopsis thaliana (Mouse-ear cress).